Consider the following 286-residue polypeptide: Pantothenate synthetase (286 aa).

30–37 serves as a coordination point for ATP; it reads MGNLHRGH. His-37 functions as the Proton donor in the catalytic mechanism. Residue Gln-61 participates in (R)-pantoate binding. Gln-61 contributes to the beta-alanine binding site. Residue 149–152 coordinates ATP; it reads GEKD. Gln-155 provides a ligand contact to (R)-pantoate. Residues Val-178 and 186 to 189 contribute to the ATP site; that span reads LSSR.

The protein belongs to the pantothenate synthetase family. In terms of assembly, homodimer.

It localises to the cytoplasm. The catalysed reaction is (R)-pantoate + beta-alanine + ATP = (R)-pantothenate + AMP + diphosphate + H(+). It functions in the pathway cofactor biosynthesis; (R)-pantothenate biosynthesis; (R)-pantothenate from (R)-pantoate and beta-alanine: step 1/1. Functionally, catalyzes the condensation of pantoate with beta-alanine in an ATP-dependent reaction via a pantoyl-adenylate intermediate. This is Pantothenate synthetase from Nitrosococcus oceani (strain ATCC 19707 / BCRC 17464 / JCM 30415 / NCIMB 11848 / C-107).